Here is a 430-residue protein sequence, read N- to C-terminus: RNA polymerase-associated protein LEO1 (430 aa).

The segment covering 1 to 10 (MSSSEGNSDA) has biased composition (polar residues). Residues 1–128 (MSSSEGNSDA…SRGSLNDLQG (128 aa)) form a disordered region. A compositionally biased stretch (low complexity) spans 18–30 (KSSTPSSRGSSPD). Basic and acidic residues predominate over residues 99–119 (REGKPKESNTRARLSDSDAES). Coiled-coil stretches lie at residues 326 to 347 (TRRE…RTQM) and 409 to 429 (EEYR…DEES). Positions 349-430 (RNNFKVRGPR…QIVTSDEESD (82 aa)) are disordered.

Belongs to the LEO1 family. In terms of assembly, component of the PAF1 complex which consists of at least cdc-73, ctr-9, leo-1, pafo-1 and rtfo-1.

The protein resides in the nucleus. Its subcellular location is the cytoplasm. In terms of biological role, component of the PAF1 complex which is a multifunctional complex involved in transcription initiation via genetic interactions with TATA-binding proteins, elongation and transcription-coupled histone modification. This is RNA polymerase-associated protein LEO1 from Caenorhabditis elegans.